Reading from the N-terminus, the 315-residue chain is Taste receptor type 2 member 129 (315 aa).

The Extracellular segment spans residues 1–9 (MDGIIQIIS). The chain crosses the membrane as a helical span at residues 10-30 (AFIVIIEIIIGWFGNGFIVLV). Residues 31–46 (NCMHWIKRRRISTVNQ) are Cytoplasmic-facing. A helical transmembrane segment spans residues 47-67 (ILTALAFSRIYLLLTVFTVIL). Residues 68–101 (ASVQYSNILVTRREVKVIIFHLITSNHFSMWLAA) are Extracellular-facing. A helical membrane pass occupies residues 102-122 (CLGLFYFLKIANFSNFIFVFL). Residues 123-128 (KKRVNK) lie on the Cytoplasmic side of the membrane. The chain crosses the membrane as a helical span at residues 129–149 (VVSGTLLMSLVFLFLNTLLIN). Residues 150–185 (SYIDAQIDDYRGYLLYDFTSNITVSFYRVILVINNC) are Extracellular-facing. Asn-170 is a glycosylation site (N-linked (GlcNAc...) asparagine). Residues 186-206 (IFTSIPFALSQSTFLMLIFSL) traverse the membrane as a helical segment. Residues 207–233 (WRHYKKMQQHAQRCRDTLTNAHIKVLQ) lie on the Cytoplasmic side of the membrane. The helical transmembrane segment at 234–254 (TMIMYVLLSAIFFLFLSMQIW) threads the bilayer. Topologically, residues 255 to 266 (RNKLMENILFIR) are extracellular. A helical transmembrane segment spans residues 267 to 287 (FCETVAAVFPSGHSCVLIWGD). Over 288 to 315 (TNLRQTFLSVLWWLKHRFTLWVPKLYCR) the chain is Cytoplasmic.

Belongs to the G-protein coupled receptor T2R family.

Its subcellular location is the membrane. Putative taste receptor which may play a role in the perception of bitterness. This is Taste receptor type 2 member 129 from Rattus norvegicus (Rat).